A 483-amino-acid polypeptide reads, in one-letter code: ATP-dependent RNA helicase DDX25 (483 aa).

Positions 97-125 match the Q motif motif; the sequence is KSFEELHLKNELLRGIYAMGFNRPSKIQE. The region spanning 130–300 is the Helicase ATP-binding domain; sequence MMLADPPQNL…ERIVPDPNII (171 aa). 143–150 is an ATP binding site; that stretch reads SQSGTGKT. The DEAD box signature appears at 247 to 250; sequence DEAD. The 168-residue stretch at 311–478 folds into the Helicase C-terminal domain; the sequence is NIQQFYDQCE…KLNSMDMDEM (168 aa).

The protein belongs to the DEAD box helicase family. In terms of tissue distribution, an mRNA component of germ plasm. Localizes to the granulo-fibrillar material (GFM) of the mitochondrial cloud in stage I oocytes. Associated, at a low level, with the periphery of mature germinal granules in later stage oocytes. Localizes to the vegetal cortex in stage II oocytes and segregates with germ plasm during early embryogenesis. In adults, expression is restricted to the ovary and, at a lower level, to spermatogonia, spermatocytes and spermatids of the testis.

It is found in the cytoplasm. It localises to the nucleus. It catalyses the reaction ATP + H2O = ADP + phosphate + H(+). Functionally, ATP-dependent RNA helicase. The polypeptide is ATP-dependent RNA helicase DDX25 (Xenopus laevis (African clawed frog)).